The following is a 155-amino-acid chain: UPF0260 protein NGR_c07710 (155 aa).

This sequence belongs to the UPF0260 family.

This Sinorhizobium fredii (strain NBRC 101917 / NGR234) protein is UPF0260 protein NGR_c07710.